The sequence spans 92 residues: Small ribosomal subunit protein uS19 (92 aa).

Belongs to the universal ribosomal protein uS19 family.

Its function is as follows. Protein S19 forms a complex with S13 that binds strongly to the 16S ribosomal RNA. In Sinorhizobium medicae (strain WSM419) (Ensifer medicae), this protein is Small ribosomal subunit protein uS19.